The sequence spans 343 residues: Mitochondrial amidoxime-reducing component 1 (343 aa).

At 1–25 (MSNTVFSGAVGPLRAAALSISRHRL) the chain is on the mitochondrial matrix side. A helical; Signal-anchor for type II membrane protein transmembrane segment spans residues 26–44 (PLLCAAGLGLTAVASWMWW). Topologically, residues 45–343 (RKRQGEAEDL…DPVYRVTRKG (299 aa)) are cytoplasmic. Positions 69, 70, and 94 each coordinate Mo-molybdopterin. An MOSC N-terminal region region spans residues 95-186 (HWLVVTEEGN…SSQPYRLVHF (92 aa)). The 159-residue stretch at 181-339 (YRLVHFEADV…IRVGDPVYRV (159 aa)) folds into the MOSC domain. Positions 215, 242, 276, 277, and 321 each coordinate Mo-molybdopterin.

Mo-molybdopterin serves as cofactor.

It is found in the mitochondrion outer membrane. It localises to the membrane. The catalysed reaction is N(omega)-hydroxy-L-arginine + 2 Fe(II)-[cytochrome b5] + 2 H(+) = L-arginine + 2 Fe(III)-[cytochrome b5] + H2O. Catalyzes the reduction of N-oxygenated molecules, acting as a counterpart of cytochrome P450 and flavin-containing monooxygenases in metabolic cycles. As a component of prodrug-converting system, reduces a multitude of N-hydroxylated prodrugs particularly amidoximes, leading to increased drug bioavailability. May be involved in mitochondrial N(omega)-hydroxy-L-arginine (NOHA) reduction, regulating endogenous nitric oxide levels and biosynthesis. Postulated to cleave the N-OH bond of N-hydroxylated substrates in concert with electron transfer from NADH to cytochrome b5 reductase then to cytochrome b5, the ultimate electron donor that primes the active site for substrate reduction. The chain is Mitochondrial amidoxime-reducing component 1 (mtarc1) from Xenopus laevis (African clawed frog).